The chain runs to 1215 residues: Endoplasmic reticulum transmembrane helix translocase (1215 aa).

Topologically, residues 1-27 (MTKKSFVSSPIVRDSTLLVPKSLIAKP) are cytoplasmic. Residues 28-43 (YVLPFFPLYATFAQLY) form a helical membrane-spanning segment. Topologically, residues 44 to 56 (FQQYDRYIKGPEW) are lumenal. Residues 57–76 (TFVYLGTLVSLNILVMLMPA) form a helical membrane-spanning segment. The Cytoplasmic segment spans residues 77 to 188 (WNVKIKAKFN…ENSFDIPIPT (112 aa)). An A-domain; part 1 region spans residues 156 to 185 (KIGDFQKCKGHSGDLTHLKRLYGENSFDIP). Residues 189–216 (FMELFKEHAVAPLFVFQVFCVALWLLDE) traverse the membrane as a helical segment. Residue phenylalanine 217 is a topological domain, lumenal. The helical transmembrane segment at 218-246 (WYYSLFNLFMIISMEAAAVFQRLTALKEF) threads the bilayer. The Cytoplasmic segment spans residues 247 to 395 (RTMGIKPYTI…IYSAERVSVD (149 aa)). Residues 250–390 (GIKPYTINVF…LVRVMIYSAE (141 aa)) form an A-domain; part 2 region. A Phosphoserine modification is found at serine 324. The chain crosses the membrane as a helical span at residues 396–425 (NKEALMFILFLLIFAVIASWYVWVEGTKMG). At 426-427 (RI) the chain is on the lumenal side. A run of 2 helical transmembrane segments spans residues 428–442 (QSKLILDCILIITSV) and 446–464 (ELPMELTMAVNSSLAALAK). The Cytoplasmic portion of the chain corresponds to 465–971 (FYVYCTEPFR…APFTSKLANV (507 aa)). A P-domain; part 1 region spans residues 466 to 495 (YVYCTEPFRIPFAGRIDVCCFDKTGTLTGE). Catalysis depends on aspartate 487, which acts as the 4-aspartylphosphate intermediate. Mg(2+)-binding residues include aspartate 487 and threonine 489. ATP is bound by residues 487–489 (DKT), phenylalanine 582, arginine 634, aspartate 699, and 816–820 (DGTND). Positions 497–674 (LVFEGLAGIS…FNGFLIFHCP (178 aa)) are N-domain. Positions 677-837 (DDAIETIKML…HVGIALLNGT (161 aa)) are P-domain; part 2. Aspartate 816 contributes to the Mg(2+) binding site. The interval 838 to 953 (EEGLKKLGEQ…DAQGDEAPAL (116 aa)) is arm-like. Serine 936 carries the post-translational modification Phosphoserine. A P-domain; part 3 region spans residues 954–969 (KLGDASCAAPFTSKLA). The helical transmembrane segment at 972–1011 (SAVTNIIRQGRCALVNTIQMYKILALNCLISAYSLSIIYM) threads the bilayer. At 1012–1017 (AGVKFG) the chain is on the lumenal side. A helical transmembrane segment spans residues 1018–1035 (DGQATVSGLLLSVCFLSI). Over 1036–1055 (SRGKPLEKLSKQRPQSGIFN) the chain is Cytoplasmic. The chain crosses the membrane as a helical span at residues 1056–1084 (VYIMGSILSQFAVHIATLVYITTEIYKLE). Topologically, residues 1085-1099 (PREPQVDLEKEFAPS) are lumenal. The helical transmembrane segment at 1100–1121 (LLNTGIFIIQLVQQVSTFAVNY) threads the bilayer. At 1122–1133 (QGEPFRENIRSN) the chain is on the cytoplasmic side. Residues 1134 to 1151 (KGMYYGLLGVTGLALASA) form a helical membrane-spanning segment. Topologically, residues 1152 to 1168 (TEFLPELNEAMKFVPMT) are lumenal. The chain crosses the membrane as a helical span at residues 1169-1197 (DDFKIKLTLTLLLDFFGSWGVEHFFKFFF). Over 1198–1215 (MDDKPSDISVQQVKIASK) the chain is Cytoplasmic.

The protein belongs to the cation transport ATPase (P-type) (TC 3.A.3) family. Type V subfamily. The cofactor is Mg(2+).

Its subcellular location is the endoplasmic reticulum membrane. The enzyme catalyses [protein]-with a C-terminal TM segment(out) + ATP + H2O = [protein]-with a C-terminal TM segment(in) + ADP + phosphate + H(+). Its activity is regulated as follows. The ATPase activity is stimulated by phosphatidylinositol 4-phosphate (PI4P). Functionally, endoplasmic reticulum translocase required to remove mitochondrial transmembrane proteins mistargeted to the endoplasmic reticulum. Acts as a dislocase that mediates the ATP-dependent extraction of mislocalized mitochondrial transmembrane proteins from the endoplasmic reticulum membrane. Specifically binds mitochondrial tail-anchored transmembrane proteins: has an atypically large substrate-binding pocket that recognizes and binds moderately hydrophobic transmembranes with short hydrophilic lumenal domains. The polypeptide is Endoplasmic reticulum transmembrane helix translocase (Saccharomyces cerevisiae (strain ATCC 204508 / S288c) (Baker's yeast)).